Here is a 743-residue protein sequence, read N- to C-terminus: DEAD-box ATP-dependent RNA helicase 3B, chloroplastic (743 aa).

Residues 1–37 constitute a chloroplast transit peptide; it reads MASLTLPALALALSNPGAVRLRAAAFRCWALRRRGWA. The segment at 60 to 79 is disordered; that stretch reads GSDDEDGEGPYGSDADEGFE. Positions 61 to 79 are enriched in acidic residues; sequence SDDEDGEGPYGSDADEGFE. The Q motif motif lies at 88 to 116; sequence LAIARLGLPDELVATLEKRGITHLFPIQR. A Helicase ATP-binding domain is found at 119 to 295; sequence LIPALEGRDL…RRYLNNPLTI (177 aa). 132 to 139 contributes to the ATP binding site; that stretch reads AKTGTGKT. The DEAD box motif lies at 243 to 246; it reads DEAD. The region spanning 324-469 is the Helicase C-terminal domain; that stretch reads VLSDLITVYA…ISPPSIEEVL (146 aa). The tract at residues 606 to 719 is disordered; it reads LTKISKLPAL…RSSSFGGRES (114 aa). The span at 642–653 shows a compositional bias: gly residues; it reads GGGASRGRGGWD. The span at 657-671 shows a compositional bias: basic and acidic residues; the sequence is EDRFRRGGRSLRSDN. Residues 688–719 are compositionally biased toward low complexity; it reads RSSSFGSRSSSYSSRGSPSFGGRSSSFGGRES. The segment at 725–742 adopts a CCHC-type zinc-finger fold; it reads GACFNCGESGHRATDCPN.

It belongs to the DEAD box helicase family. DDX21/DDX50 subfamily.

The protein localises to the plastid. It is found in the chloroplast stroma. The enzyme catalyses ATP + H2O = ADP + phosphate + H(+). In terms of biological role, nuclear genome-encoded factor involved in ribosome biogenesis in chloroplasts. Binds specific group II introns in chloroplasts and facilitates their splicing. Is required for rRNA maturation in plastids and may contribute to the assembly of the large (50S) ribosomal subunit. Required for normal development of chloroplasts. This chain is DEAD-box ATP-dependent RNA helicase 3B, chloroplastic, found in Zea mays (Maize).